We begin with the raw amino-acid sequence, 680 residues long: tRNA 5-methylaminomethyl-2-thiouridine biosynthesis bifunctional protein MnmC (680 aa).

The interval 1 to 267 (MTAEPNKPCQ…MAAILSSDAP (267 aa)) is tRNA (mnm(5)s(2)U34)-methyltransferase. An FAD-dependent cmnm(5)s(2)U34 oxidoreductase region spans residues 273–680 (IGGGLASAHL…LRKLLKGKSL (408 aa)).

The protein in the N-terminal section; belongs to the methyltransferase superfamily. tRNA (mnm(5)s(2)U34)-methyltransferase family. This sequence in the C-terminal section; belongs to the DAO family. FAD is required as a cofactor.

It is found in the cytoplasm. It catalyses the reaction 5-aminomethyl-2-thiouridine(34) in tRNA + S-adenosyl-L-methionine = 5-methylaminomethyl-2-thiouridine(34) in tRNA + S-adenosyl-L-homocysteine + H(+). Catalyzes the last two steps in the biosynthesis of 5-methylaminomethyl-2-thiouridine (mnm(5)s(2)U) at the wobble position (U34) in tRNA. Catalyzes the FAD-dependent demodification of cmnm(5)s(2)U34 to nm(5)s(2)U34, followed by the transfer of a methyl group from S-adenosyl-L-methionine to nm(5)s(2)U34, to form mnm(5)s(2)U34. The chain is tRNA 5-methylaminomethyl-2-thiouridine biosynthesis bifunctional protein MnmC from Shewanella sp. (strain W3-18-1).